The chain runs to 209 residues: Large ribosomal subunit protein uL3 (209 aa).

Residues 133–153 (THGNSLSHRVPGSIGQNQTPG) are disordered. N5-methylglutamine is present on Gln150.

It belongs to the universal ribosomal protein uL3 family. Part of the 50S ribosomal subunit. Forms a cluster with proteins L14 and L19. Methylated by PrmB.

In terms of biological role, one of the primary rRNA binding proteins, it binds directly near the 3'-end of the 23S rRNA, where it nucleates assembly of the 50S subunit. The chain is Large ribosomal subunit protein uL3 from Pectobacterium carotovorum subsp. carotovorum (strain PC1).